The sequence spans 337 residues: Anthranilate phosphoribosyltransferase (337 aa).

5-phospho-alpha-D-ribose 1-diphosphate contacts are provided by residues Gly-81, 84 to 85 (GD), Ser-89, 91 to 94 (NVST), 109 to 117 (KHGNRALSS), and Ala-121. Gly-81 contacts anthranilate. A Mg(2+)-binding site is contributed by Ser-93. An anthranilate-binding site is contributed by Asn-112. Anthranilate is bound at residue Arg-167. Asp-226 and Glu-227 together coordinate Mg(2+).

It belongs to the anthranilate phosphoribosyltransferase family. Homodimer. Mg(2+) is required as a cofactor.

It carries out the reaction N-(5-phospho-beta-D-ribosyl)anthranilate + diphosphate = 5-phospho-alpha-D-ribose 1-diphosphate + anthranilate. The protein operates within amino-acid biosynthesis; L-tryptophan biosynthesis; L-tryptophan from chorismate: step 2/5. Catalyzes the transfer of the phosphoribosyl group of 5-phosphorylribose-1-pyrophosphate (PRPP) to anthranilate to yield N-(5'-phosphoribosyl)-anthranilate (PRA). The chain is Anthranilate phosphoribosyltransferase from Bradyrhizobium sp. (strain ORS 278).